Reading from the N-terminus, the 761-residue chain is MDQGGGILELHKDLKMPHTMIMPDFGMSGIAHLDGEHIVVSVPEAVMVSDVVTDEEGIMLETALEAEVVEEPDICQEDVITTEGVIMSESILGAEVAIQEALSGTADLIEETVPDQVFVAELMSPHIQSPLDHNLVSAEVMVTDADTVIDSHDTLQSDVTIKADDDVEDVKSTSEDYLMISLDEVGGKLDIEDTSLKISADVGQDDDGSKEDEFSSEVIKVYIFKADGDEDVEIGSTEVVEESDFPGRHTVMESVGSGRLPREKMVYMAVKDANQEDDLNCSEMTDQVYMEVIVGEEEAPAITEAQMEDSPVNKTIVPAAWATAYGSSLESKNGAATPYLQITDSISTSRALKQKIKKRRRGETRQCQTAVIIGPDGQPLTVYPCHICGKKFKSRGFLKRHMKNHPDHMFKKKYQCTDCEFTTNKKVSFHNHLESHKLIIKNEKIPEYTEYTRRYHEASPLSSNKLILRDKEPKLHKCKYCEYETAEQGLLNRHLLAVHSKNFAHVCVECAKGFRHPSELKKHMRTHTGEKPFHCQHCEFSCADQSNLKTHIKSKHGTDLPFKCGHCPQAFADDKELQRHAEIFQGHKTHQCPHCEHKSTNSSDLKRHIISVHTKDFPHKCDVCEKGFHRPSELKKHSETHKGNKVHQCRHCDFKTLDPFTLSRHILSVHTKDLPFKCKRCKRGFRHQNELKKHMKTHSGRKVYQCQYCEYNTTDASGFKRHVISIHTKDYPHRCDYCKKGFRRPSEKNQHIMRHHKETLL.

5 consecutive C2H2-type zinc fingers follow at residues 383–408 (YPCH…HPDH), 414–436 (YQCT…LESH), 476–499 (HKCK…LAVH), 505–527 (HVCV…MRTH), and 533–556 (FHCQ…KSKH). The C2H2-type 6; atypical zinc-finger motif lies at 562–584 (FKCGHCPQAFADDKELQRHAEIF). The Zn(2+) site is built by Cys564, Cys567, and His580. C2H2-type zinc fingers lie at residues 590 to 613 (HQCP…ISVH), 619 to 641 (HKCD…SETH), 647 to 670 (HQCR…LSVH), 676 to 698 (FKCK…MKTH), 704 to 727 (YQCQ…ISIH), and 733 to 755 (HRCD…IMRH).

This sequence belongs to the krueppel C2H2-type zinc-finger protein family. In terms of tissue distribution, present in ovary and brain but not in other tissues (at protein level).

The protein localises to the nucleus. It localises to the cytoplasm. Functionally, transcription regulator required for brain development. Probably acts as a transcription factor that binds to the promoter of target genes, leading to activate their expression. This chain is Zinc finger protein 711 (znf711), found in Danio rerio (Zebrafish).